A 75-amino-acid polypeptide reads, in one-letter code: Putative DNA-directed RNA polymerase subunit omega (75 aa).

This sequence belongs to the RNA polymerase subunit omega family.

Its subcellular location is the plastid. It is found in the chloroplast. It carries out the reaction RNA(n) + a ribonucleoside 5'-triphosphate = RNA(n+1) + diphosphate. In terms of biological role, may be involved in RNA polymerase activity. This is Putative DNA-directed RNA polymerase subunit omega (rpoZ) from Porphyra purpurea (Red seaweed).